The primary structure comprises 46 residues: Phospholipase A2 superbin c (46 aa).

Tyrosine 28, glycine 30, and glycine 32 together coordinate Ca(2+). A disulfide bond links cysteine 29 and cysteine 45.

It depends on Ca(2+) as a cofactor. As to expression, expressed by the venom gland.

The protein resides in the secreted. The catalysed reaction is a 1,2-diacyl-sn-glycero-3-phosphocholine + H2O = a 1-acyl-sn-glycero-3-phosphocholine + a fatty acid + H(+). Functionally, snake venom phospholipase A2 (PLA2) that inhibits collagen-induced platelet aggregation. In terms of inhibition of platelet aggregation, superbin c is more potent as superbin d. PLA2 catalyzes the calcium-dependent hydrolysis of the 2-acyl groups in 3-sn-phosphoglycerides. This chain is Phospholipase A2 superbin c, found in Austrelaps superbus (Lowland copperhead snake).